Here is a 363-residue protein sequence, read N- to C-terminus: Type 3 secretion system translocon protein SctB (363 aa).

Over residues 1-16 (MEIQNTKPTQTLYTDI) the composition is skewed to polar residues. The tract at residues 1 to 30 (MEIQNTKPTQTLYTDISTKQTQSSSETQKS) is disordered. Residues 17–30 (STKQTQSSSETQKS) are compositionally biased toward low complexity. The segment at 33–73 (YQQIAAHIPLNVGKNPVLTTTLNDDQLLKLSEQVQHDSEII) is ipgC chaperone binding domain. A helical membrane pass occupies residues 99 to 120 (ISSLSSNAVSLIISVAVLLSAL).

The protein belongs to the SctB/SipC family. The core secretion machinery of the T3SS is composed of approximately 20 different proteins, including cytoplasmic components, a base, an export apparatus and a needle. This subunit is involved in the formation of a pore, called the translocon, in host membrane. Interacts with IpaB/SctE. Interacts with the molecular chaperone IpgC, which prevents premature association with IpaB/SctE within the cytoplasm of Shigella cells. Does not interact with CDC42 or RAC1 GTPases in vitro.

It is found in the secreted. Its subcellular location is the host membrane. Interaction with the membrane is affected by the pH. Functionally, component of the type III secretion system (T3SS), also called injectisome, which is used to inject bacterial effector proteins into eukaryotic host cells. IpaB/SctE and IpaC/SctB are inserted into the host membrane where they form a pore and allow the translocation of effector proteins into the cytosol of target cells. Induction and secretion of IpaC/SctB comprise the final step in triggering the induction of full type III secretion. In terms of biological role, required for efficient dissemination. Necessary for lysis of the two cellular membranes that surround bacteria in protrusions during cell-to-cell spread. Contribute to actin nucleation in vitro, which may be a necessary step in Shigella invasion. The protein is Type 3 secretion system translocon protein SctB of Shigella flexneri.